The chain runs to 231 residues: Cytochrome c oxidase subunit 2 (231 aa).

Residues 1–30 (MNNFFQGYNLLFQHSLFASYMDWFHSFNCS) lie on the Mitochondrial intermembrane side of the membrane. The chain crosses the membrane as a helical span at residues 31-52 (LLLGVLVFVTLLFGYLIFGTFY). Topologically, residues 53 to 69 (FKSKKIEYQFGELLCSI) are mitochondrial matrix. Residues 70–89 (FPTIILLMQMVPSLSLLYYY) traverse the membrane as a helical segment. Topologically, residues 90-231 (GLMNLDSNLT…FKSWCFGTME (142 aa)) are mitochondrial intermembrane. Cu cation contacts are provided by histidine 164, cysteine 199, glutamate 201, cysteine 203, histidine 207, and methionine 210. Glutamate 201 is a binding site for Mg(2+).

Belongs to the cytochrome c oxidase subunit 2 family. As to quaternary structure, component of the cytochrome c oxidase (complex IV, CIV), a multisubunit enzyme composed of a catalytic core of 3 subunits and several supernumerary subunits. The complex exists as a monomer or a dimer and forms supercomplexes (SCs) in the inner mitochondrial membrane with ubiquinol-cytochrome c oxidoreductase (cytochrome b-c1 complex, complex III, CIII). Cu cation serves as cofactor.

It is found in the mitochondrion inner membrane. It carries out the reaction 4 Fe(II)-[cytochrome c] + O2 + 8 H(+)(in) = 4 Fe(III)-[cytochrome c] + 2 H2O + 4 H(+)(out). Functionally, component of the cytochrome c oxidase, the last enzyme in the mitochondrial electron transport chain which drives oxidative phosphorylation. The respiratory chain contains 3 multisubunit complexes succinate dehydrogenase (complex II, CII), ubiquinol-cytochrome c oxidoreductase (cytochrome b-c1 complex, complex III, CIII) and cytochrome c oxidase (complex IV, CIV), that cooperate to transfer electrons derived from NADH and succinate to molecular oxygen, creating an electrochemical gradient over the inner membrane that drives transmembrane transport and the ATP synthase. Cytochrome c oxidase is the component of the respiratory chain that catalyzes the reduction of oxygen to water. Electrons originating from reduced cytochrome c in the intermembrane space (IMS) are transferred via the dinuclear copper A center (CU(A)) of subunit 2 and heme A of subunit 1 to the active site in subunit 1, a binuclear center (BNC) formed by heme A3 and copper B (CU(B)). The BNC reduces molecular oxygen to 2 water molecules using 4 electrons from cytochrome c in the IMS and 4 protons from the mitochondrial matrix. This Caenorhabditis elegans protein is Cytochrome c oxidase subunit 2.